A 288-amino-acid chain; its full sequence is Probable prolyl 4-hydroxylase 6 (288 aa).

Over 1 to 4 the chain is Cytoplasmic; it reads MDSQ. The helical; Signal-anchor for type II membrane protein transmembrane segment at 5–27 threads the bilayer; that stretch reads YFLAFSLSLLLIFSQISSFSFSV. The Lumenal segment spans residues 28–288; sequence DPTRITQLSW…GFCRKSCKAC (261 aa). In terms of domain architecture, Fe2OG dioxygenase spans 116–238; the sequence is NGEALQILHY…KWSATRWIHV (123 aa). His-134 and Asp-136 together coordinate Fe cation. N-linked (GlcNAc...) asparagine glycosylation is found at Asn-160 and Asn-210. His-219 contributes to the Fe cation binding site. A 2-oxoglutarate-binding site is contributed by Lys-229. The 41-residue stretch at 248–288 folds into the ShKT domain; sequence CVDDHESCQEWADAGECEKNPMYMVGSETSLGFCRKSCKAC. Disulfide bonds link Cys-248–Cys-288, Cys-255–Cys-281, and Cys-264–Cys-285.

It belongs to the P4HA family. Fe(2+) is required as a cofactor. Requires L-ascorbate as cofactor.

The protein resides in the endoplasmic reticulum membrane. The enzyme catalyses L-prolyl-[collagen] + 2-oxoglutarate + O2 = trans-4-hydroxy-L-prolyl-[collagen] + succinate + CO2. Catalyzes the post-translational formation of 4-hydroxyproline in -Xaa-Pro-Gly- sequences in proline-rich peptide sequences of plant glycoproteins and other proteins. Hydroxyprolines are important constituent of many plant cell wall glycoproteins such as extensins, hydroxyproline-rich glycoproteins, lectins and arabinogalactan proteins. This Arabidopsis thaliana (Mouse-ear cress) protein is Probable prolyl 4-hydroxylase 6.